Reading from the N-terminus, the 397-residue chain is Acetate kinase (397 aa).

Residue Asn8 participates in Mg(2+) binding. Lys15 is a binding site for ATP. Arg89 contributes to the substrate binding site. Asp146 acts as the Proton donor/acceptor in catalysis. ATP contacts are provided by residues 206-210 (HLGNG), 281-283 (DLR), and 329-333 (GIGEN). Glu382 is a binding site for Mg(2+).

The protein belongs to the acetokinase family. As to quaternary structure, homodimer. Mg(2+) serves as cofactor. Mn(2+) is required as a cofactor.

The protein resides in the cytoplasm. The enzyme catalyses acetate + ATP = acetyl phosphate + ADP. It functions in the pathway metabolic intermediate biosynthesis; acetyl-CoA biosynthesis; acetyl-CoA from acetate: step 1/2. Catalyzes the formation of acetyl phosphate from acetate and ATP. Can also catalyze the reverse reaction. The polypeptide is Acetate kinase (Anoxybacillus flavithermus (strain DSM 21510 / WK1)).